The following is a 492-amino-acid chain: N-succinylglutamate 5-semialdehyde dehydrogenase (492 aa).

An NAD(+)-binding site is contributed by 220 to 225 (GSASTG). Catalysis depends on residues glutamate 243 and cysteine 277.

It belongs to the aldehyde dehydrogenase family. AstD subfamily.

It catalyses the reaction N-succinyl-L-glutamate 5-semialdehyde + NAD(+) + H2O = N-succinyl-L-glutamate + NADH + 2 H(+). It functions in the pathway amino-acid degradation; L-arginine degradation via AST pathway; L-glutamate and succinate from L-arginine: step 4/5. In terms of biological role, catalyzes the NAD-dependent reduction of succinylglutamate semialdehyde into succinylglutamate. This is N-succinylglutamate 5-semialdehyde dehydrogenase from Salmonella heidelberg (strain SL476).